A 289-amino-acid chain; its full sequence is Oxaloacetate decarboxylase (289 aa).

Ser-50 serves as a coordination point for substrate. Position 88 (Asp-88) interacts with Mg(2+). Substrate is bound by residues Arg-159 and His-235.

The protein belongs to the isocitrate lyase/PEP mutase superfamily. Oxaloacetate decarboxylase family. As to quaternary structure, homotetramer; dimer of dimers. Mg(2+) serves as cofactor.

It carries out the reaction oxaloacetate + H(+) = pyruvate + CO2. Functionally, catalyzes the decarboxylation of oxaloacetate into pyruvate. Seems to play a role in maintaining cellular concentrations of bicarbonate and pyruvate. The sequence is that of Oxaloacetate decarboxylase from Pseudomonas syringae pv. tomato (strain ATCC BAA-871 / DC3000).